The following is a 1247-amino-acid chain: SAM and SH3 domain-containing protein 1 (1247 aa).

Positions 1–39 are disordered; the sequence is MEDAGAAGPGPEPEPEPEPEPEPAPEPEPEPKPGAGTSE. Acidic residues predominate over residues 13–28; it reads PEPEPEPEPEPAPEPE. At S90 the chain carries Phosphoserine. 3 disordered regions span residues 126–145, 221–257, and 316–344; these read VERK…VGKG, AALD…ESVK, and FFDG…LDTW. Residue S248 is modified to Phosphoserine. Residues 331 to 343 are compositionally biased toward low complexity; that stretch reads SLTTSPSSSSLDT. At S407 the chain carries Phosphoserine. A disordered region spans residues 449–573; it reads SLGKKVKSVK…DFTPSPYDTD (125 aa). Composition is skewed to low complexity over residues 468-484 and 505-523; these read KYSS…DGMP and GGSV…SMSG. A compositionally biased stretch (polar residues) spans 524–536; that stretch reads QTVSTTDSSTSNR. In terms of domain architecture, SH3 spans 554 to 615; it reads PFCGRARVHT…KFIYVDVLSE (62 aa). A Phosphoserine modification is found at S614. 2 disordered regions span residues 616 to 639 and 713 to 810; these read DEEK…KSVE and DSQG…LNKN. Over residues 622 to 631 the composition is skewed to basic residues; the sequence is RPTRRRRKGR. Positions 633-697 constitute an SAM 1 domain; sequence PQPKSVEDLL…LTAVELLQEY (65 aa). Polar residues predominate over residues 746-765; it reads SAKSSTEPSLKSFSRNQLGN. A phosphoserine mark is found at S821 and S839. Disordered regions lie at residues 846–884, 903–946, and 971–1065; these read EPGA…PLEQ, PQKL…LART, and DAEQ…SELP. A required for interaction with TRAF6 region spans residues 852–860; it reads DVPTEVTEP. T858 is subject to Phosphothreonine. Positions 1050–1060 are enriched in pro residues; sequence GSPPSTRPPPW. Residues 1177–1241 form the SAM 2 domain; the sequence is GCISSVSDWL…LSAARLFKLP (65 aa).

In terms of assembly, interacts with GNAS. Interacts with IQGAP1. Interacts with TRAF6 (via C-terminus); the interaction is LPS-dependent. Interacts with MAP3K7, CHUK and IKBKB. Expressed ubiquitously, with highest levels in lung, placenta, spleen and thymus. Down-regulated in the majority (74%) of breast tumors in comparison with corresponding normal breast epithelial tissues. Expressed in the epidermis, epidermal keratinocytes, dermal fibroblasts and melanocytes.

It is found in the cytoplasm. In terms of biological role, is a positive regulator of NF-kappa-B signaling downstream of TLR4 activation. It acts as a scaffold molecule to assemble a molecular complex that includes TRAF6, MAP3K7, CHUK and IKBKB, thereby facilitating NF-kappa-B signaling activation. Regulates TRAF6 and MAP3K7 ubiquitination. Involved in the regulation of cell mobility. Regulates lipolysaccharide (LPS)-induced endothelial cell migration. Is involved in the regulation of skin pigmentation through the control of melanocyte migration in the epidermis. This is SAM and SH3 domain-containing protein 1 (SASH1) from Homo sapiens (Human).